A 379-amino-acid chain; its full sequence is Chaperone protein DnaJ (379 aa).

The 66-residue stretch at 5-70 (DYYETLEVSQ…QKRAAYDQYG (66 aa)) folds into the J domain. A CR-type zinc finger spans residues 135-213 (GKSLEIKVPT…CRGQGRVEKT (79 aa)). 8 residues coordinate Zn(2+): Cys-148, Cys-151, Cys-165, Cys-168, Cys-187, Cys-190, Cys-201, and Cys-204. 4 CXXCXGXG motif repeats span residues 148 to 155 (CEPCDGSG), 165 to 172 (CSTCHGHG), 187 to 194 (CPTCSGKG), and 201 to 208 (CTSCRGQG).

The protein belongs to the DnaJ family. In terms of assembly, homodimer. It depends on Zn(2+) as a cofactor.

It is found in the cytoplasm. Participates actively in the response to hyperosmotic and heat shock by preventing the aggregation of stress-denatured proteins and by disaggregating proteins, also in an autonomous, DnaK-independent fashion. Unfolded proteins bind initially to DnaJ; upon interaction with the DnaJ-bound protein, DnaK hydrolyzes its bound ATP, resulting in the formation of a stable complex. GrpE releases ADP from DnaK; ATP binding to DnaK triggers the release of the substrate protein, thus completing the reaction cycle. Several rounds of ATP-dependent interactions between DnaJ, DnaK and GrpE are required for fully efficient folding. Also involved, together with DnaK and GrpE, in the DNA replication of plasmids through activation of initiation proteins. The protein is Chaperone protein DnaJ of Colwellia maris.